The chain runs to 357 residues: Ribosomal RNA large subunit methyltransferase M (357 aa).

Residues S183, 216 to 219, D235, D255, and D271 contribute to the S-adenosyl-L-methionine site; that span reads APGG. K300 serves as the catalytic Proton acceptor.

Belongs to the class I-like SAM-binding methyltransferase superfamily. RNA methyltransferase RlmE family. RlmM subfamily. As to quaternary structure, monomer.

Its subcellular location is the cytoplasm. It catalyses the reaction cytidine(2498) in 23S rRNA + S-adenosyl-L-methionine = 2'-O-methylcytidine(2498) in 23S rRNA + S-adenosyl-L-homocysteine + H(+). In terms of biological role, catalyzes the 2'-O-methylation at nucleotide C2498 in 23S rRNA. This chain is Ribosomal RNA large subunit methyltransferase M, found in Pseudomonas fluorescens (strain ATCC BAA-477 / NRRL B-23932 / Pf-5).